A 464-amino-acid polypeptide reads, in one-letter code: Argininosuccinate lyase (464 aa).

It belongs to the lyase 1 family. Argininosuccinate lyase subfamily.

It localises to the cytoplasm. It catalyses the reaction 2-(N(omega)-L-arginino)succinate = fumarate + L-arginine. It functions in the pathway amino-acid biosynthesis; L-arginine biosynthesis; L-arginine from L-ornithine and carbamoyl phosphate: step 3/3. This chain is Argininosuccinate lyase, found in Streptococcus suis (strain 98HAH33).